We begin with the raw amino-acid sequence, 143 residues long: Actin-depolymerizing factor 5 (143 aa).

One can recognise an ADF-H domain in the interval 11-143; it reads GMRVTDECTS…GFDIIQDRAK (133 aa).

Belongs to the actin-binding proteins ADF family. Expressed exclusively in root tip meristem.

The protein resides in the cytoplasm. It is found in the cytoskeleton. Functionally, actin-depolymerizing protein. Severs actin filaments (F-actin) and binds to actin monomers. The chain is Actin-depolymerizing factor 5 (ADF5) from Arabidopsis thaliana (Mouse-ear cress).